Here is a 447-residue protein sequence, read N- to C-terminus: Signal recognition particle 54 kDa protein (447 aa).

Residues 108–115 (GLYGMGKT), 188–192 (DTAGR), and 246–249 (TKLD) contribute to the GTP site.

Belongs to the GTP-binding SRP family. SRP54 subfamily. Part of the signal recognition particle protein translocation system, which is composed of SRP and FtsY. Archaeal SRP consists of a 7S RNA molecule of 300 nucleotides and two protein subunits: SRP54 and SRP19.

Its subcellular location is the cytoplasm. The catalysed reaction is GTP + H2O = GDP + phosphate + H(+). Functionally, involved in targeting and insertion of nascent membrane proteins into the cytoplasmic membrane. Binds to the hydrophobic signal sequence of the ribosome-nascent chain (RNC) as it emerges from the ribosomes. The SRP-RNC complex is then targeted to the cytoplasmic membrane where it interacts with the SRP receptor FtsY. The chain is Signal recognition particle 54 kDa protein from Methanopyrus kandleri (strain AV19 / DSM 6324 / JCM 9639 / NBRC 100938).